The following is a 122-amino-acid chain: MARIAGVNIPTAKRVVIALRYIHGIGPKFAQEICEKVGIPAERRVNQLTDAEVLQIRETIDRDYQVEGDLRRETSMNIKRLMDLGSYRGLRHRRSLPVRGQRTHTNARTRKGPAKAIAGKKK.

Residues 97–122 (PVRGQRTHTNARTRKGPAKAIAGKKK) form a disordered region.

It belongs to the universal ribosomal protein uS13 family. In terms of assembly, part of the 30S ribosomal subunit. Forms a loose heterodimer with protein S19. Forms two bridges to the 50S subunit in the 70S ribosome.

Located at the top of the head of the 30S subunit, it contacts several helices of the 16S rRNA. In the 70S ribosome it contacts the 23S rRNA (bridge B1a) and protein L5 of the 50S subunit (bridge B1b), connecting the 2 subunits; these bridges are implicated in subunit movement. Contacts the tRNAs in the A and P-sites. The polypeptide is Small ribosomal subunit protein uS13 (Rhizobium rhizogenes (strain K84 / ATCC BAA-868) (Agrobacterium radiobacter)).